We begin with the raw amino-acid sequence, 441 residues long: 3-phosphoshikimate 1-carboxyvinyltransferase (441 aa).

Lys22, Ser23, and Arg27 together coordinate 3-phosphoshikimate. Lys22 is a phosphoenolpyruvate binding site. 2 residues coordinate phosphoenolpyruvate: Gly95 and Arg123. 4 residues coordinate 3-phosphoshikimate: Ser168, Gln170, Asp321, and Lys348. Gln170 contributes to the phosphoenolpyruvate binding site. Asp321 (proton acceptor) is an active-site residue. Phosphoenolpyruvate is bound by residues Arg352 and Arg400.

This sequence belongs to the EPSP synthase family. In terms of assembly, monomer.

The protein resides in the cytoplasm. The enzyme catalyses 3-phosphoshikimate + phosphoenolpyruvate = 5-O-(1-carboxyvinyl)-3-phosphoshikimate + phosphate. The protein operates within metabolic intermediate biosynthesis; chorismate biosynthesis; chorismate from D-erythrose 4-phosphate and phosphoenolpyruvate: step 6/7. Its function is as follows. Catalyzes the transfer of the enolpyruvyl moiety of phosphoenolpyruvate (PEP) to the 5-hydroxyl of shikimate-3-phosphate (S3P) to produce enolpyruvyl shikimate-3-phosphate and inorganic phosphate. This is 3-phosphoshikimate 1-carboxyvinyltransferase from Novosphingobium aromaticivorans (strain ATCC 700278 / DSM 12444 / CCUG 56034 / CIP 105152 / NBRC 16084 / F199).